Reading from the N-terminus, the 299-residue chain is 33 kDa chaperonin (299 aa).

2 cysteine pairs are disulfide-bonded: cysteine 240–cysteine 242 and cysteine 273–cysteine 276.

Belongs to the HSP33 family. Under oxidizing conditions two disulfide bonds are formed involving the reactive cysteines. Under reducing conditions zinc is bound to the reactive cysteines and the protein is inactive.

Its subcellular location is the cytoplasm. Redox regulated molecular chaperone. Protects both thermally unfolding and oxidatively damaged proteins from irreversible aggregation. Plays an important role in the bacterial defense system toward oxidative stress. The polypeptide is 33 kDa chaperonin (Gloeothece citriformis (strain PCC 7424) (Cyanothece sp. (strain PCC 7424))).